Reading from the N-terminus, the 988-residue chain is Fanconi-associated nuclease 1 (988 aa).

Residues 1–39 form a disordered region; sequence MESQTGRKSARRLSMTKKKSQSVCPIKERTSNGGAASIT. The segment covering 8-20 has biased composition (basic residues); that stretch reads KSARRLSMTKKKS. The segment at 49-77 adopts a UBZ4-type zinc-finger fold; it reads KLACPLCGKLVPRYKINEHIDSQCQNFLV. Zn(2+) contacts are provided by C52, C55, H67, and C72. Disordered regions lie at residues 87-115, 164-256, and 269-307; these read TKAPSNSALASNNEREKSPGDKDADTSPF, TRVS…NTTE, and SSIERGDESKVKSDQTEASSSAYDVPTSKSPIKSKTTQE. Residues 89-98 show a composition bias toward polar residues; sequence APSNSALASN. Composition is skewed to basic and acidic residues over residues 99 to 111 and 167 to 182; these read NEREKSPGDKDAD and SDNEKDHNADLNRSQK. Residues 183 to 195 show a composition bias toward polar residues; that stretch reads ENCMNSLTFGSER. Residues 224–238 are compositionally biased toward low complexity; sequence SDSSISSDVHTSSSS. Basic and acidic residues predominate over residues 272-283; sequence ERGDESKVKSDQ. Over residues 284-303 the composition is skewed to polar residues; it reads TEASSSAYDVPTSKSPIKSK. A coiled-coil region spans residues 636 to 663; it reads SRGVEILQRLKRYEDAVEQLRNLLSQSV. E805, D931, E946, and V947 together coordinate Mn(2+). One can recognise a VRR-NUC domain in the interval 866–978; it reads VETLQDLIAD…GADVEVCHVT (113 aa).

This sequence belongs to the FAN1 family. Interacts with fancd2 (when monoubiquitinated). Mn(2+) serves as cofactor. Requires Mg(2+) as cofactor.

The protein localises to the nucleus. The enzyme catalyses Hydrolytically removes 5'-nucleotides successively from the 3'-hydroxy termini of 3'-hydroxy-terminated oligonucleotides.. In terms of biological role, nuclease required for the repair of DNA interstrand cross-links (ICL) recruited at sites of DNA damage by monoubiquitinated FANCD2. Specifically involved in repair of ICL-induced DNA breaks by being required for efficient homologous recombination, probably in the resolution of homologous recombination intermediates. Acts as a 5'-3' exonuclease that anchors at a cut end of DNA and cleaves DNA successively at every third nucleotide, allowing to excise an ICL from one strand through flanking incisions. Probably keeps excising with 3'-flap annealing until it reaches and unhooks the ICL. Acts at sites that have a 5'-terminal phosphate anchor at a nick or a 1- or 2-nucleotide flap and is augmented by a 3' flap. Also has endonuclease activity toward 5'-flaps. This is Fanconi-associated nuclease 1 (fan1) from Danio rerio (Zebrafish).